The primary structure comprises 473 residues: 1-deoxy-D-xylulose 5-phosphate reductoisomerase, chloroplastic (473 aa).

Residues 1–49 (MALKVVSFPGDLAAVSFLDSNRGGAFNQLKVDLPFQTRDRRAVSLRRTC) constitute a chloroplast transit peptide. Residues Thr85, Gly86, Ser87, Ile88, Gly111, Asn113, and Asn199 each coordinate NADPH. A 1-deoxy-D-xylulose 5-phosphate-binding site is contributed by Lys200. An NADPH-binding site is contributed by Glu201. Asp225 provides a ligand contact to Mn(2+). 4 residues coordinate 1-deoxy-D-xylulose 5-phosphate: Ser226, Glu227, Ser251, and His274. A Mn(2+)-binding site is contributed by Glu227. Residue Gly280 coordinates NADPH. 4 residues coordinate 1-deoxy-D-xylulose 5-phosphate: Ser287, Asn292, Lys293, and Glu296. Glu296 contributes to the Mn(2+) binding site.

The protein belongs to the DXR family. Mn(2+) is required as a cofactor. It depends on Mg(2+) as a cofactor.

The protein resides in the plastid. The protein localises to the chloroplast stroma. It carries out the reaction 2-C-methyl-D-erythritol 4-phosphate + NADP(+) = 1-deoxy-D-xylulose 5-phosphate + NADPH + H(+). It participates in isoprenoid biosynthesis; isopentenyl diphosphate biosynthesis via DXP pathway; isopentenyl diphosphate from 1-deoxy-D-xylulose 5-phosphate: step 1/6. In terms of biological role, enzyme of the plastid non-mevalonate pathway for isoprenoid biosynthesis that catalyzes the NADPH-dependent rearrangement and reduction of 1-deoxy-D-xylulose-5-phosphate (DXP) to 2-C-methyl-D-erythritol 4-phosphate (MEP). Required for chloroplast development. This chain is 1-deoxy-D-xylulose 5-phosphate reductoisomerase, chloroplastic (DXR), found in Oryza sativa subsp. japonica (Rice).